The following is a 220-amino-acid chain: Probable septum site-determining protein MinC (220 aa).

This sequence belongs to the MinC family. In terms of assembly, interacts with MinD and FtsZ.

Its function is as follows. Cell division inhibitor that blocks the formation of polar Z ring septums. Rapidly oscillates between the poles of the cell to destabilize FtsZ filaments that have formed before they mature into polar Z rings. Prevents FtsZ polymerization. This chain is Probable septum site-determining protein MinC, found in Vibrio parahaemolyticus serotype O3:K6 (strain RIMD 2210633).